The following is an 800-amino-acid chain: MSEIIQDLSLEDVLGDRFGRYSKYIIQERALPDVRDGLKPVQRRILYAMYSSGNTHDKNFRKSAKTVGDVIGQYHPHGDSSVYEAMVRLSQDWKLRHVLIEMHGNNGSIDNDPPAAMRYTEAKLSLLAEELLRDINKETVSFIPNYDDTTLEPMVLPSRFPNLLVNGSTGISAGYATDIPPHNLAEVIQATLKYIDNPDITVNQLMKYIKGPDFPTGGIIQGIDGIKKAYESGKGRIIVRSKVEEETLRNGRKQLIITEIPYEVNKSSLVKRIDELRADKKVDGIVEVRDETDRTGLRIAIELKKDVNSESIKNYLYKNSDLQISYNFNMVAISDGRPKLMGIRQIIDSYLNHQIEVVANRTKFELDNAEKRMHIVEGLIKALSILDKVIELIRSSKNKRDAKENLIEVFEFTEEQAEAIVMLQLYRLTNTDIVALEGEHKELEALIKQLRHILDNHDALLNVIKEELNEIKKKFKSERLSLIEAEIEEIKIDKEVMVPSEEVILSMTRHGYIKRTSIRSFNASGVEDIGLKDGDSLLKHQEVNTQDTVLVFTNKGRYLFIPVHKLADIRWKELGQHVSQIVPIEEDEVVINVFNEKDFNTDAFYVFATQNGMIKKSTVPLFKTTRFNKPLIATKVKENDDLISVMRFEKDQLITVITNKGMSLTYNTSELSDTGLRAAGVKSINLKAEDFVVMTEGVSENDTILMATQRGSLKRISFKILQVAKRAQRGITLLKELKKNPHRIVAAHVVTGEHSQYTLYSKSNEEHGLINDIHKSEQYTNGSFIVDTDDFGEVIDMYIS.

The 465-residue stretch at 31–495 (LPDVRDGLKP…EIEEIKIDKE (465 aa)) folds into the Topo IIA-type catalytic domain. The active-site O-(5'-phospho-DNA)-tyrosine intermediate is tyrosine 119.

This sequence belongs to the type II topoisomerase GyrA/ParC subunit family. ParC type 2 subfamily. Heterotetramer composed of ParC and ParE.

It is found in the cell membrane. The enzyme catalyses ATP-dependent breakage, passage and rejoining of double-stranded DNA.. Its function is as follows. Topoisomerase IV is essential for chromosome segregation. It relaxes supercoiled DNA. Performs the decatenation events required during the replication of a circular DNA molecule. This chain is DNA topoisomerase 4 subunit A, found in Staphylococcus aureus (strain N315).